Reading from the N-terminus, the 554-residue chain is ATP-dependent RNA helicase MRH4, mitochondrial (554 aa).

A mitochondrion-targeting transit peptide spans 1–54 (MSSVGIASASLWLRGPVKSALKGRWLSCEQMRRYGTKSAPAVRKGGHSKKARQA). The Q motif signature appears at 119-140 (DCGLDDKRVAAFLGQVQPTPIQ). Residues 150–337 (TLMEPQLQVH…NKLFPNLQVV (188 aa)) enclose the Helicase ATP-binding domain. 163–170 (AETGSGKT) contributes to the ATP binding site. Residues 285-288 (DEAD) carry the DEAD box motif. In terms of domain architecture, Helicase C-terminal spans 368-554 (ALAQALYAIM…PVVKKNRPIQ (187 aa)). A disordered region spans residues 439–474 (RIQDQVRPSELKKPQERRLPNSNIKVADSKDNGQRS). Residues 445–457 (RPSELKKPQERRL) show a composition bias toward basic and acidic residues.

Belongs to the DEAD box helicase family. MRH4 subfamily.

The protein localises to the mitochondrion. It carries out the reaction ATP + H2O = ADP + phosphate + H(+). In terms of biological role, ATP-binding RNA helicase involved in mitochondrial RNA metabolism. Required for maintenance of mitochondrial DNA. This is ATP-dependent RNA helicase MRH4, mitochondrial (MRH4) from Eremothecium gossypii (strain ATCC 10895 / CBS 109.51 / FGSC 9923 / NRRL Y-1056) (Yeast).